The primary structure comprises 938 residues: TFIIH basal transcription factor complex helicase/translocase XPB subunit (938 aa).

The region spanning 394-562 is the Helicase ATP-binding domain; sequence FRSGNKAHQG…DLRHLVGPKL (169 aa). 407 to 414 is a binding site for ATP; it reads LPCGAGKT. The DEVH box motif lies at 515 to 518; it reads DEVH. The Helicase C-terminal domain occupies 627–781; it reads WCTQALLEFH…SYRVLQSDMV (155 aa).

It belongs to the helicase family. RAD25/XPB subfamily. As to quaternary structure, component of the 7-subunit TFIIH core complex composed of XPB, XPD, SSL1, TFB1, TFB2, TFB4 and TFB5.

It carries out the reaction Couples ATP hydrolysis with the unwinding of duplex DNA by translocating in the 3'-5' direction.. The catalysed reaction is ATP + H2O = ADP + phosphate + H(+). Its function is as follows. ATP-dependent 3'-5' DNA helicase/translocase; binds dsDNA rather than ssDNA, unzipping it in a translocase rather than classical helicase activity. Component of the general transcription factor IIH (TFIIH) core complex, involved in spliced leader RNA (SL RNA) gene transcription by RNA polymerase II. TFIIH has an essential role in transcription initiation. When the pre-initiation complex (PIC) has been established, TFIIH is required for promoter opening and promoter escape. The ATPase activity of XPB is required for promoter opening and promoter escape. The sequence is that of TFIIH basal transcription factor complex helicase/translocase XPB subunit from Trypanosoma brucei brucei (strain 927/4 GUTat10.1).